A 121-amino-acid chain; its full sequence is Large ribosomal subunit protein uL14 (121 aa).

It belongs to the universal ribosomal protein uL14 family. Part of the 50S ribosomal subunit. Forms a cluster with proteins L3 and L19. In the 70S ribosome, L14 and L19 interact and together make contacts with the 16S rRNA in bridges B5 and B8.

Its function is as follows. Binds to 23S rRNA. Forms part of two intersubunit bridges in the 70S ribosome. This is Large ribosomal subunit protein uL14 from Synechococcus sp. (strain CC9605).